We begin with the raw amino-acid sequence, 683 residues long: Leishmanolysin-like peptidase (683 aa).

Residue His257 coordinates Zn(2+). Glu258 is an active-site residue. Residues His261 and His364 each coordinate Zn(2+).

It belongs to the peptidase M8 family. The cofactor is Zn(2+).

It localises to the cytoplasm. Its function is as follows. Essential for the coordination of mitotic progression, and also plays a role in cell migration. The sequence is that of Leishmanolysin-like peptidase (Invadolysin) from Drosophila melanogaster (Fruit fly).